We begin with the raw amino-acid sequence, 302 residues long: NAD kinase 2 (302 aa).

The active-site Proton acceptor is the D78. Residues 78–79 (DG), 152–153 (NE), D182, 193–198 (TAYSLS), and A217 contribute to the NAD(+) site.

The protein belongs to the NAD kinase family. It depends on a divalent metal cation as a cofactor.

It is found in the cytoplasm. The enzyme catalyses NAD(+) + ATP = ADP + NADP(+) + H(+). In terms of biological role, involved in the regulation of the intracellular balance of NAD and NADP, and is a key enzyme in the biosynthesis of NADP. Catalyzes specifically the phosphorylation on 2'-hydroxyl of the adenosine moiety of NAD to yield NADP. The sequence is that of NAD kinase 2 from Prochlorococcus marinus (strain SARG / CCMP1375 / SS120).